The sequence spans 920 residues: Coatomer subunit beta'-1 (920 aa).

WD repeat units lie at residues 13-52 (QRSERVKSVDLHPTEPWILASLYSGTLCIWNYQTQTMVKS), 55-94 (VTELPVRSAKFIARKQWVVAGADDMFIRVYNYNTMDKIKV), 97-136 (AHADYIRCVAVHPTLPYVLSSSDDMLIKLWDWEKGWLCTQ), 140-180 (GHSH…PNFT), 183-224 (AHLK…CVQT), 227-266 (GHTHNVSAVSFHPELPIIITGSEDGTVRIWHATTYRLENT), 350-392 (TCDL…GSAL), and 460-500 (RIDV…SYFD). Residues 850–920 (LEQGDVLDEV…EQWVLTPPQE (71 aa)) form a disordered region. The span at 854–875 (DVLDEVGEEGEDGEEEEEEDRQ) shows a compositional bias: acidic residues.

Belongs to the WD repeat COPB2 family. Oligomeric complex that consists of at least the alpha, beta, beta', gamma, delta, epsilon and zeta subunits.

The protein resides in the cytoplasm. It localises to the golgi apparatus membrane. The protein localises to the cytoplasmic vesicle. It is found in the COPI-coated vesicle membrane. The coatomer is a cytosolic protein complex that binds to dilysine motifs and reversibly associates with Golgi non-clathrin-coated vesicles, which further mediate biosynthetic protein transport from the ER, via the Golgi up to the trans Golgi network. Coatomer complex is required for budding from Golgi membranes, and is essential for the retrograde Golgi-to-ER transport of dilysine-tagged proteins. This Arabidopsis thaliana (Mouse-ear cress) protein is Coatomer subunit beta'-1.